Consider the following 335-residue polypeptide: Tryptophan--tRNA ligase (335 aa).

ATP-binding positions include 13 to 15 and 21 to 22; these read QPS and GN. A 'HIGH' region motif is present at residues 14–22; sequence PSGELTIGN. Position 138 (Asp-138) interacts with L-tryptophan. ATP contacts are provided by residues 150–152, Ile-189, and 198–202; these read GKD and KMSKS. Positions 198 to 202 match the 'KMSKS' region motif; it reads KMSKS.

Belongs to the class-I aminoacyl-tRNA synthetase family. In terms of assembly, homodimer.

It localises to the cytoplasm. It carries out the reaction tRNA(Trp) + L-tryptophan + ATP = L-tryptophyl-tRNA(Trp) + AMP + diphosphate + H(+). Functionally, catalyzes the attachment of tryptophan to tRNA(Trp). This is Tryptophan--tRNA ligase from Clostridium acetobutylicum (strain ATCC 824 / DSM 792 / JCM 1419 / IAM 19013 / LMG 5710 / NBRC 13948 / NRRL B-527 / VKM B-1787 / 2291 / W).